The sequence spans 327 residues: L-lactate dehydrogenase (327 aa).

NAD(+) contacts are provided by residues valine 18, aspartate 39, lysine 44, tyrosine 69, and 83–84 (GA). Substrate contacts are provided by residues glutamine 86, arginine 92, and 124–127 (NPVD). NAD(+) is bound by residues 122–124 (AAN) and serine 147. 152–155 (DSAR) provides a ligand contact to substrate. The beta-D-fructose 1,6-bisphosphate site is built by arginine 157 and histidine 172. The active-site Proton acceptor is the histidine 179. Tyrosine 224 bears the Phosphotyrosine mark. Threonine 233 is a substrate binding site.

It belongs to the LDH/MDH superfamily. LDH family. Homotetramer.

The protein localises to the cytoplasm. It carries out the reaction (S)-lactate + NAD(+) = pyruvate + NADH + H(+). Its pathway is fermentation; pyruvate fermentation to lactate; (S)-lactate from pyruvate: step 1/1. Its activity is regulated as follows. Allosterically activated by fructose 1,6-bisphosphate (FBP). Catalyzes the conversion of lactate to pyruvate. The chain is L-lactate dehydrogenase from Streptococcus equi subsp. equi (strain 4047).